Consider the following 355-residue polypeptide: Anthocyanin synthase (355 aa).

Substrate is bound by residues tyrosine 145 and lysine 216. Positions 211–310 (LLLQMKINYY…RISWAVFCEP (100 aa)) constitute a Fe2OG dioxygenase domain. Residue 218 to 220 (NYY) participates in 2-oxoglutarate binding. Fe cation is bound at residue histidine 235. Position 236 (threonine 236) interacts with substrate. Fe cation contacts are provided by aspartate 237 and histidine 291. Residues arginine 301 and 301 to 303 (RIS) contribute to the 2-oxoglutarate site. 2 residues coordinate substrate: glutamate 309 and lysine 344.

This sequence belongs to the iron/ascorbate-dependent oxidoreductase family. L-ascorbate is required as a cofactor. It depends on Fe(2+) as a cofactor. In terms of tissue distribution, expressed in stems and leaves. Expressed at low levels in ovaries.

The catalysed reaction is a (2R,3S,4S)-leucoanthocyanidin + 2-oxoglutarate + O2 = a 4-H-anthocyanidin with a 3-hydroxy group + succinate + CO2 + 2 H2O. Its pathway is pigment biosynthesis; anthocyanin biosynthesis. Functionally, involved in anthocyanin biosynthesis by catalyzing the oxidation of leucoanthocyanidins into anthocyanidins. Required for the accumulation of anthocyanin in red-fleshed kiwifruit varieties. The chain is Anthocyanin synthase from Actinidia chinensis var. chinensis (Chinese soft-hair kiwi).